The following is a 553-amino-acid chain: Phospholipase-B 81 (553 aa).

The N-terminal stretch at 1–35 (MVRFGSAASSDNRRRRCWSWYWGGLLLLWAVAETR) is a signal peptide. N-linked (GlcNAc...) asparagine glycans are attached at residues asparagine 69, asparagine 313, asparagine 416, and asparagine 531.

Belongs to the phospholipase B-like family. In terms of tissue distribution, expressed by the venom gland.

The protein resides in the secreted. May cause hemolysis. This Drysdalia coronoides (White-lipped snake) protein is Phospholipase-B 81.